Here is a 271-residue protein sequence, read N- to C-terminus: Phosphate import ATP-binding protein PstB (271 aa).

Positions 25 to 266 (VDVRQLSLWY…PKHPYTEAYI (242 aa)) constitute an ABC transporter domain. 57 to 64 (GPSGCGKS) provides a ligand contact to ATP.

Belongs to the ABC transporter superfamily. Phosphate importer (TC 3.A.1.7) family. In terms of assembly, the complex is composed of two ATP-binding proteins (PstB), two transmembrane proteins (PstC and PstA) and a solute-binding protein (PstS).

It is found in the cell inner membrane. The enzyme catalyses phosphate(out) + ATP + H2O = ADP + 2 phosphate(in) + H(+). Its function is as follows. Part of the ABC transporter complex PstSACB involved in phosphate import. Responsible for energy coupling to the transport system. This Thermus thermophilus (strain ATCC BAA-163 / DSM 7039 / HB27) protein is Phosphate import ATP-binding protein PstB.